The chain runs to 397 residues: GPI mannosyltransferase 1 (397 aa).

A run of 9 helical transmembrane segments spans residues 5–25 (ECLL…YGIY), 79–99 (WVHF…VMVM), 111–128 (LILA…TVST), 156–176 (GFVY…ALPI), 193–213 (LTMG…MYYI), 257–277 (WAEF…YVLW), 307–327 (YFIW…LSGA), 330–350 (IFLI…GYLL), and 362–382 (LFSA…QFIL).

The protein belongs to the PIGM family.

It localises to the endoplasmic reticulum membrane. It functions in the pathway glycolipid biosynthesis; glycosylphosphatidylinositol-anchor biosynthesis. Its function is as follows. Mannosyltransferase involved in glycosylphosphatidylinositol-anchor biosynthesis. Transfers the first alpha-1,4-mannose to GlcN-acyl-PI during GPI precursor assembly. Required for cell wall integrity. The polypeptide is GPI mannosyltransferase 1 (GPI14) (Eremothecium gossypii (strain ATCC 10895 / CBS 109.51 / FGSC 9923 / NRRL Y-1056) (Yeast)).